The chain runs to 945 residues: Bifunctional glutamine synthetase adenylyltransferase/adenylyl-removing enzyme (945 aa).

The adenylyl removase stretch occupies residues M1 to E440. The segment at A449–A945 is adenylyl transferase.

It belongs to the GlnE family. Mg(2+) serves as cofactor.

The enzyme catalyses [glutamine synthetase]-O(4)-(5'-adenylyl)-L-tyrosine + phosphate = [glutamine synthetase]-L-tyrosine + ADP. It catalyses the reaction [glutamine synthetase]-L-tyrosine + ATP = [glutamine synthetase]-O(4)-(5'-adenylyl)-L-tyrosine + diphosphate. Involved in the regulation of glutamine synthetase GlnA, a key enzyme in the process to assimilate ammonia. When cellular nitrogen levels are high, the C-terminal adenylyl transferase (AT) inactivates GlnA by covalent transfer of an adenylyl group from ATP to specific tyrosine residue of GlnA, thus reducing its activity. Conversely, when nitrogen levels are low, the N-terminal adenylyl removase (AR) activates GlnA by removing the adenylyl group by phosphorolysis, increasing its activity. The regulatory region of GlnE binds the signal transduction protein PII (GlnB) which indicates the nitrogen status of the cell. The sequence is that of Bifunctional glutamine synthetase adenylyltransferase/adenylyl-removing enzyme from Klebsiella pneumoniae subsp. pneumoniae (strain ATCC 700721 / MGH 78578).